Consider the following 331-residue polypeptide: Vitamin B12 import system permease protein BtuC (331 aa).

The next 9 helical transmembrane spans lie at 20–42 (IMSV…FLSP), 62–84 (LVAA…VLLG), 91–113 (GVLG…LPVL), 118–140 (IFML…IARA), 147–169 (RLLL…AFYF), 189–208 (ASWY…VWLC), 240–262 (LAIS…VGLV), 277–299 (YLLP…GARL), and 306–325 (LPLG…WMLV).

The protein belongs to the binding-protein-dependent transport system permease family. FecCD subfamily. The complex is composed of two ATP-binding proteins (BtuD), two transmembrane proteins (BtuC) and a solute-binding protein (BtuF).

It is found in the cell inner membrane. Its function is as follows. Part of the ABC transporter complex BtuCDF involved in vitamin B12 import. Involved in the translocation of the substrate across the membrane. The chain is Vitamin B12 import system permease protein BtuC from Vibrio parahaemolyticus serotype O3:K6 (strain RIMD 2210633).